The sequence spans 111 residues: Nucleoid-associated protein CYB_2894 (111 aa).

Belongs to the YbaB/EbfC family. Homodimer.

The protein localises to the cytoplasm. It localises to the nucleoid. Binds to DNA and alters its conformation. May be involved in regulation of gene expression, nucleoid organization and DNA protection. The chain is Nucleoid-associated protein CYB_2894 from Synechococcus sp. (strain JA-2-3B'a(2-13)) (Cyanobacteria bacterium Yellowstone B-Prime).